A 304-amino-acid chain; its full sequence is ATP synthase gamma chain (304 aa).

It belongs to the ATPase gamma chain family. F-type ATPases have 2 components, CF(1) - the catalytic core - and CF(0) - the membrane proton channel. CF(1) has five subunits: alpha(3), beta(3), gamma(1), delta(1), epsilon(1). CF(0) has three main subunits: a, b and c.

Its subcellular location is the cell membrane. Produces ATP from ADP in the presence of a proton gradient across the membrane. The gamma chain is believed to be important in regulating ATPase activity and the flow of protons through the CF(0) complex. In Mycolicibacterium paratuberculosis (strain ATCC BAA-968 / K-10) (Mycobacterium paratuberculosis), this protein is ATP synthase gamma chain.